A 482-amino-acid polypeptide reads, in one-letter code: Transcription initiation factor IIE subunit alpha (482 aa).

The 91-residue stretch at 9-99 (VKNLLKFVVR…KYPHAIDAIK (91 aa)) folds into the HTH TFE/IIEalpha-type domain. The C4-type zinc finger occupies 124–152 (CPICLTKYTQLEAVQLLNFDRTEFLCSLC). Basic and acidic residues predominate over residues 274–286 (RELQERQAEEKRK). Disordered regions lie at residues 274–295 (RELQ…EWHK) and 321–482 (AMDS…FEDV). Polar residues predominate over residues 321-345 (AMDSINPDNEPAQETSYQNNRTLTE). Acidic residues predominate over residues 374–401 (EEEEEEEEEEDEEEEEEEEMEDVMDDND). A compositionally biased stretch (polar residues) spans 419–432 (TAGTAKTESNTSND). Over residues 433–444 (VKQESINDKTED) the composition is skewed to basic and acidic residues. Positions 464–482 (GDDDDDDDDDEMDIEFEDV) are enriched in acidic residues.

This sequence belongs to the TFIIE alpha subunit family. In terms of assembly, TFIIE is a tetramer of two alpha (TFA1) and two beta (TFA2) subunits.

The protein localises to the nucleus. Functionally, recruits TFIIH to the initiation complex and stimulates the RNA polymerase II C-terminal domain kinase and DNA-dependent ATPase activities of TFIIH. Both TFIIH and TFIIE are required for promoter clearance by RNA polymerase. This Saccharomyces cerevisiae (strain ATCC 204508 / S288c) (Baker's yeast) protein is Transcription initiation factor IIE subunit alpha (TFA1).